The sequence spans 551 residues: Arginine--tRNA ligase (551 aa).

Positions 123 to 133 (ANPTGPLTIGR) match the 'HIGH' region motif.

Belongs to the class-I aminoacyl-tRNA synthetase family. Monomer.

The protein localises to the cytoplasm. It carries out the reaction tRNA(Arg) + L-arginine + ATP = L-arginyl-tRNA(Arg) + AMP + diphosphate. In Chlorobium phaeobacteroides (strain DSM 266 / SMG 266 / 2430), this protein is Arginine--tRNA ligase.